Consider the following 193-residue polypeptide: Probable GTP-binding protein EngB (193 aa).

An EngB-type G domain is found at 22-193 (ALPEFALAGR…EAWAALERFL (172 aa)). GTP contacts are provided by residues 30-37 (GRSNVGKS), 57-61 (GKTQT), 75-78 (DVPG), 142-145 (TKAD), and 174-176 (FSA). Positions 37 and 59 each coordinate Mg(2+).

The protein belongs to the TRAFAC class TrmE-Era-EngA-EngB-Septin-like GTPase superfamily. EngB GTPase family. The cofactor is Mg(2+).

In terms of biological role, necessary for normal cell division and for the maintenance of normal septation. The protein is Probable GTP-binding protein EngB of Geobacillus sp. (strain WCH70).